The chain runs to 746 residues: Polyphosphate kinase (746 aa).

The segment covering 1–17 (MRQPNTQAEAQHTQPSV) has biased composition (polar residues). Residues 1–60 (MRQPNTQAEAQHTQPSVGSIAAHRPNTVAATVSGLEPDIDADLDAYEESEESQDGGARLP) are disordered. The span at 37–53 (PDIDADLDAYEESEESQ) shows a compositional bias: acidic residues. N102 provides a ligand contact to ATP. Residues R429 and R459 each contribute to the Mg(2+) site. Catalysis depends on H489, which acts as the Phosphohistidine intermediate. Residues Y522, R618, and H646 each contribute to the ATP site.

Belongs to the polyphosphate kinase 1 (PPK1) family. Mg(2+) is required as a cofactor. In terms of processing, an intermediate of this reaction is the autophosphorylated ppk in which a phosphate is covalently linked to a histidine residue through a N-P bond.

It carries out the reaction [phosphate](n) + ATP = [phosphate](n+1) + ADP. In terms of biological role, catalyzes the reversible transfer of the terminal phosphate of ATP to form a long-chain polyphosphate (polyP). This chain is Polyphosphate kinase, found in Streptomyces coelicolor (strain ATCC BAA-471 / A3(2) / M145).